The primary structure comprises 395 residues: Mannan polymerase complexes subunit MNN9 (395 aa).

At 2 to 17 (SLSLVSYRLRKNPWVN) the chain is on the cytoplasmic side. Residues 18–33 (IFLPVLAIFLIYIIFF) traverse the membrane as a helical; Signal-anchor for type II membrane protein segment. Residues 34-395 (QRDQSLLGLN…LVYHIEEENH (362 aa)) lie on the Lumenal side of the membrane.

The protein belongs to the ANP1/MMN9/VAN1 family. As to quaternary structure, the M-Pol I complex contains MNN9 and VAN1. The M-Pol II complex is composed of ANP1, MNN9, MNN10, MNN11 and HOC1.

Its subcellular location is the endoplasmic reticulum membrane. The protein resides in the golgi apparatus membrane. The protein operates within protein modification; protein glycosylation. In terms of biological role, the M-Pol I and M-Pol II complexes possess alpha-1,6-mannosyltransferase activity and are probably involved in the elongation of the mannan backbone of N-linked glycans on cell wall and periplasmic proteins. May also provide alpha-1,2-mannosyltransferase activity to the M-Pol I complex. The sequence is that of Mannan polymerase complexes subunit MNN9 (MNN9) from Saccharomyces cerevisiae (strain ATCC 204508 / S288c) (Baker's yeast).